The primary structure comprises 146 residues: D-aminoacyl-tRNA deacylase (146 aa).

Positions 137–138 (GP) match the Gly-cisPro motif, important for rejection of L-amino acids motif.

It belongs to the DTD family. Homodimer.

It localises to the cytoplasm. It carries out the reaction glycyl-tRNA(Ala) + H2O = tRNA(Ala) + glycine + H(+). It catalyses the reaction a D-aminoacyl-tRNA + H2O = a tRNA + a D-alpha-amino acid + H(+). Functionally, an aminoacyl-tRNA editing enzyme that deacylates mischarged D-aminoacyl-tRNAs. Also deacylates mischarged glycyl-tRNA(Ala), protecting cells against glycine mischarging by AlaRS. Acts via tRNA-based rather than protein-based catalysis; rejects L-amino acids rather than detecting D-amino acids in the active site. By recycling D-aminoacyl-tRNA to D-amino acids and free tRNA molecules, this enzyme counteracts the toxicity associated with the formation of D-aminoacyl-tRNA entities in vivo and helps enforce protein L-homochirality. The sequence is that of D-aminoacyl-tRNA deacylase from Bacillus cereus (strain ATCC 14579 / DSM 31 / CCUG 7414 / JCM 2152 / NBRC 15305 / NCIMB 9373 / NCTC 2599 / NRRL B-3711).